Here is a 297-residue protein sequence, read N- to C-terminus: 33 kDa chaperonin (297 aa).

Disulfide bonds link C234–C236 and C267–C270.

Belongs to the HSP33 family. In terms of processing, under oxidizing conditions two disulfide bonds are formed involving the reactive cysteines. Under reducing conditions zinc is bound to the reactive cysteines and the protein is inactive.

The protein localises to the cytoplasm. Its function is as follows. Redox regulated molecular chaperone. Protects both thermally unfolding and oxidatively damaged proteins from irreversible aggregation. Plays an important role in the bacterial defense system toward oxidative stress. The protein is 33 kDa chaperonin of Pseudoalteromonas atlantica (strain T6c / ATCC BAA-1087).